A 377-amino-acid polypeptide reads, in one-letter code: Tubulin--tyrosine ligase (377 aa).

The TTL domain maps to 3 to 370 (TFVVRDENSS…PPDVEQPQTQ (368 aa)).

It belongs to the tubulin--tyrosine ligase family. As to quaternary structure, monomer. Mg(2+) is required as a cofactor. Requires K(+) as cofactor.

It carries out the reaction C-terminal L-alpha-aminoacyl-L-glutamyl-L-glutamyl-[tubulin] + L-tyrosine + ATP = C-terminal L-alpha-aminoacyl-L-glutamyl-L-glutamyl-L-tyrosyl-[tubulin] + ADP + phosphate + H(+). Catalyzes the post-translational addition of a tyrosine to the C-terminal end of detyrosinated alpha-tubulin. In Homo sapiens (Human), this protein is Tubulin--tyrosine ligase (TTL).